The sequence spans 637 residues: Type II restriction enzyme and methyltransferase RM.BcgI (637 aa).

This sequence in the C-terminal section; belongs to the N(4)/N(6)-methyltransferase family. As to quaternary structure, heterotrimer of two A and one B subunit. Both subunits are necessary for DNA-binding, which is sequence non-specific. Mg(2+) is required as a cofactor.

The catalysed reaction is Endonucleolytic cleavage of DNA to give specific double-stranded fragments with terminal 5'-phosphates.. It catalyses the reaction a 2'-deoxyadenosine in DNA + S-adenosyl-L-methionine = an N(6)-methyl-2'-deoxyadenosine in DNA + S-adenosyl-L-homocysteine + H(+). DNA restriction requires S-adenosyl-L-methionine and Mg(2+), and is inhibited by S-adenosyl-homocysteine. SAM may be a cofactor for DNA restriction. Functionally, a B, G, H and S subtype restriction enzyme that recognizes the double-stranded sequence 5'-CGAN(6)TGC-3' and cleaves bilaterally and symmetrically 10 base pairs upstream and 12 base pairs downstream of the sequence to release a 34-base pair fragment. Methylation of the recognition sequence occurs on the adenine in either one or both strands; seems to methylate restricted DNA. This subunit has no methylation or DNA restriction activity on its own. The protein is Type II restriction enzyme and methyltransferase RM.BcgI of Heyndrickxia coagulans (Weizmannia coagulans).